A 280-amino-acid chain; its full sequence is P32 adhesin (280 aa).

A run of 2 helical transmembrane segments spans residues 13–37 and 68–92; these read FIVL…ALVV and WFIP…AIGL. Residues 114–128 are compositionally biased toward polar residues; it reads EQLQRISDQQEQQTV. Disordered regions lie at residues 114 to 149 and 163 to 280; these read EQLQ…QPLQ and FNPN…GLKP. 2 stretches are compositionally biased toward low complexity: residues 132–149 and 168–188; these read PQQS…QPLQ and QQRP…NFNP. Repeat copies occupy residues 163-168, 170-174, 186-190, 191-195, 196-200, 199-204, 206-210, 222-226, 227-231, 232-236, 249-254, 256-260, and 259-264. The segment at 163–264 is 6 X 5 AA repeats of [FM]-N-P-N-M-Q; that stretch reads FNPNMQQRPG…QRPGFNPNMQ (102 aa). The 5 X 5 AA repeats of R-P-G-F-N stretch occupies residues 170–260; sequence RPGFNQPNQQ…PNMQQRPGFN (91 aa). The 2 X 5 AA repeats of F-N-P-R-M stretch occupies residues 186–226; that stretch reads FNPRMNPNMQRPGFNPNMQQRPGFNQPNQQFQPHNNFNPRM. Over residues 204 to 224 the composition is skewed to low complexity; the sequence is QQRPGFNQPNQQFQPHNNFNP. Positions 235–257 are enriched in low complexity; that stretch reads FNQPHPNQFAQPNNFNPNMQQRP. Positions 261 to 271 are enriched in polar residues; that stretch reads PNMQQRPNPSQ.

It is found in the cell projection. It localises to the attachment organelle membrane. Adhesin necessary for successful cytadherence and virulence. In Mycoplasma genitalium (strain ATCC 33530 / DSM 19775 / NCTC 10195 / G37) (Mycoplasmoides genitalium), this protein is P32 adhesin.